We begin with the raw amino-acid sequence, 425 residues long: Pleckstrin homology domain-containing family A member 2 (425 aa).

The PH 1 domain occupies 7-113; sequence QNRICGFLDI…WVEALNQASK (107 aa). Lys141 is covalently cross-linked (Glycyl lysine isopeptide (Lys-Gly) (interchain with G-Cter in SUMO2)). Ser184 is modified (phosphoserine). Positions 198–298 constitute a PH 2 domain; it reads PLIKSGYCVK…WIKEIGAAVQ (101 aa). Ser314 and Ser349 each carry phosphoserine. Positions 374–410 are disordered; sequence AEDSLFTPRLGESSTSAVLPSSRIRHRSEPQHPKEKP. Over residues 400–410 the composition is skewed to basic and acidic residues; the sequence is RSEPQHPKEKP.

Binds MPDZ and PTPN13.

The protein localises to the cytoplasm. It is found in the cell membrane. It localises to the nucleus. In terms of biological role, binds specifically to phosphatidylinositol 3,4-diphosphate (PtdIns3,4P2), but not to other phosphoinositides. May recruit other proteins to the plasma membrane. This chain is Pleckstrin homology domain-containing family A member 2 (PLEKHA2), found in Bos taurus (Bovine).